We begin with the raw amino-acid sequence, 380 residues long: Lipid-A-disaccharide synthase (380 aa).

This sequence belongs to the LpxB family.

The catalysed reaction is a lipid X + a UDP-2-N,3-O-bis[(3R)-3-hydroxyacyl]-alpha-D-glucosamine = a lipid A disaccharide + UDP + H(+). The protein operates within bacterial outer membrane biogenesis; LPS lipid A biosynthesis. Functionally, condensation of UDP-2,3-diacylglucosamine and 2,3-diacylglucosamine-1-phosphate to form lipid A disaccharide, a precursor of lipid A, a phosphorylated glycolipid that anchors the lipopolysaccharide to the outer membrane of the cell. The protein is Lipid-A-disaccharide synthase of Pseudomonas syringae pv. tomato (strain ATCC BAA-871 / DC3000).